The sequence spans 75 residues: Small capsomere-interacting protein (75 aa).

It belongs to the herpesviridae small capsomere-interacting protein family. In terms of assembly, interacts with the major capsid protein/MCP.

The protein resides in the virion. Its subcellular location is the host nucleus. In terms of biological role, participates in the assembly of the infectious particles by decorating the outer surface of the capsid shell and thus forming a layer between the capsid and the tegument. Complexes composed of the major capsid protein and small capsomere-interacting protein/SCP assemble together in the host cytoplasm and are translocated to the nucleus, where they accumulate and participate in capsid assembly. The polypeptide is Small capsomere-interacting protein (Homo sapiens (Human)).